Consider the following 130-residue polypeptide: Histone H2A.6 (130 aa).

The segment covering M1–G12 has biased composition (gly residues). The segment at M1–A23 is disordered.

Belongs to the histone H2A family. In terms of assembly, the nucleosome is a histone octamer containing two molecules each of H2A, H2B, H3 and H4 assembled in one H3-H4 heterotetramer and two H2A-H2B heterodimers. The octamer wraps approximately 147 bp of DNA. Interacts with VIP1. Not ubiquitinated. Low level of expression, mainly in dividing tissues: floral buds, margins of newly emerging leaves, expanding leaves and the meristematic zone of root tips. Also expressed in many non-dividing cells of the elongation zone of the root.

The protein localises to the nucleus. Its subcellular location is the chromosome. Core component of nucleosome. Nucleosomes wrap and compact DNA into chromatin, limiting DNA accessibility to the cellular machineries which require DNA as a template. Histones thereby play a central role in transcription regulation, DNA repair, DNA replication and chromosomal stability. DNA accessibility is regulated via a complex set of post-translational modifications of histones, also called histone code, and nucleosome remodeling. Required for the T-DNA integration step of plant transformation by Agrobacterium. May play an important role in illegitimate recombination. The chain is Histone H2A.6 (RAT5) from Arabidopsis thaliana (Mouse-ear cress).